Consider the following 381-residue polypeptide: Beta-lactamase CMY-4 (381 aa).

The first 20 residues, 1–20 (MMKKSLCCALLLTASFSTFA), serve as a signal peptide directing secretion. The active-site Acyl-ester intermediate is the serine 84. Residues serine 84, glutamine 140, tyrosine 170, and asparagine 172 each contribute to the a beta-lactam site.

Belongs to the class-C beta-lactamase family.

It carries out the reaction a beta-lactam + H2O = a substituted beta-amino acid. In terms of biological role, class C beta-lactamase which confers resistance to penicillins and cephalosporins. This Klebsiella pneumoniae protein is Beta-lactamase CMY-4.